The primary structure comprises 182 residues: PRKR-interacting protein 1 homolog (182 aa).

Composition is skewed to basic and acidic residues over residues 1-18, 27-43, and 114-124; these read MAVE…KKES, PAEE…RNPD, and IENQKAAEDRT. Disordered regions lie at residues 1-80 and 114-182; these read MAVE…GEFH and IENQ…MGKR. A required for RNA-binding region spans residues 51-143; that stretch reads KPKEWNPRAP…LKQKKLMAKK (93 aa). The stretch at 99–157 forms a coiled coil; the sequence is LSEKQKLDEEYKEKLIENQKAAEDRTAKRRKKREKLKQKKLMAKKAKMESQKEEDSEKS. The span at 125 to 143 shows a compositional bias: basic residues; the sequence is AKRRKKREKLKQKKLMAKK. A required for nuclear localization region spans residues 126-138; sequence KRRKKREKLKQKK. Positions 144–156 are enriched in basic and acidic residues; the sequence is AKMESQKEEDSEK. Residues 164–173 are compositionally biased toward acidic residues; sequence EGEEKDDDAE.

The protein belongs to the PRKRIP1 family. In terms of assembly, component of the pre-catalytic and post-catalytic spliceosome complexes.

The protein localises to the nucleus. It localises to the nucleolus. Its function is as follows. Required for pre-mRNA splicing as component of the spliceosome. Binds double-stranded RNA. The polypeptide is PRKR-interacting protein 1 homolog (prkrip1) (Danio rerio (Zebrafish)).